The sequence spans 1298 residues: DNA repair protein rad-50 (1298 aa).

The ATP site is built by Arg-13, Asn-38, Gly-39, Gly-41, Lys-42, Thr-43, Thr-44, Ile-66, and Gln-158. Mg(2+) is bound at residue Thr-43. Gln-158 provides a ligand contact to Mg(2+). Coiled-coil stretches lie at residues 222 to 291 (ARQN…IRVE), 317 to 598 (EERA…QYRK), and 622 to 660 (AEEVSEKLENLRKRLKKARKDLAPLSAKSNLYDSYIEES). Residues 622-719 (AEEVSEKLEN…EEIIIVKAEG (98 aa)) enclose the Zinc-hook domain. Residues Cys-666 and Cys-669 each contribute to the Zn(2+) site. 2 coiled-coil regions span residues 691–719 (LSFPTEQEELEKLVSKLEKEEIIIVKAEG) and 754–1092 (KNEK…KESI).

The protein belongs to the SMC family. RAD50 subfamily. Component of the MRN complex composed of two heterodimers rad-50 and mre-11 associated with a single nbs-1. It depends on Zn(2+) as a cofactor.

It is found in the nucleus. The protein resides in the chromosome. The catalysed reaction is ATP + H2O = ADP + phosphate + H(+). Functionally, component of the MRN complex, which plays a central role in double-strand break (DSB) repair, DNA recombination, maintenance of telomere integrity and meiosis. The MRN complex is involved in the repair of DNA double-strand breaks (DSBs) via homologous recombination (HR), an error-free mechanism which primarily occurs during S and G2 phases. The complex (1) mediates the end resection of damaged DNA, which generates proper single-stranded DNA, a key initial steps in HR, and is (2) required for the recruitment of other repair factors and efficient activation of ATM and ATR upon DNA damage. The MRN complex possesses single-strand endonuclease activity and double-strand-specific 3'-5' exonuclease activity, which are provided by mre-11, to initiate end resection, which is required for single-strand invasion and recombination. Within the complex, rad-50 is both required to bind DNA ends and hold them in close proximity and regulate the activity of mre-11. Rad-50 provides an ATP-dependent control of mre-11 by positioning DNA ends into the mre-11 active site: ATP-binding induces a large structural change from an open form with accessible mre-11 nuclease sites into a closed form. The polypeptide is DNA repair protein rad-50 (rad-50) (Caenorhabditis elegans).